A 117-amino-acid polypeptide reads, in one-letter code: Large ribosomal subunit protein bL19 (117 aa).

The protein belongs to the bacterial ribosomal protein bL19 family.

This protein is located at the 30S-50S ribosomal subunit interface and may play a role in the structure and function of the aminoacyl-tRNA binding site. In Shewanella denitrificans (strain OS217 / ATCC BAA-1090 / DSM 15013), this protein is Large ribosomal subunit protein bL19.